Reading from the N-terminus, the 278-residue chain is Elongation factor Ts (278 aa).

The interval threonine 80 to valine 83 is involved in Mg(2+) ion dislocation from EF-Tu.

Belongs to the EF-Ts family.

The protein localises to the cytoplasm. Functionally, associates with the EF-Tu.GDP complex and induces the exchange of GDP to GTP. It remains bound to the aminoacyl-tRNA.EF-Tu.GTP complex up to the GTP hydrolysis stage on the ribosome. The chain is Elongation factor Ts from Renibacterium salmoninarum (strain ATCC 33209 / DSM 20767 / JCM 11484 / NBRC 15589 / NCIMB 2235).